We begin with the raw amino-acid sequence, 112 residues long: Transmembrane protein 14 homolog (112 aa).

The helical transmembrane segment at 3 to 23 threads the bilayer; that stretch reads VDWFGYVYAATVAAGGIMGYA.

This sequence belongs to the TMEM14 family.

The protein resides in the membrane. This Drosophila melanogaster (Fruit fly) protein is Transmembrane protein 14 homolog.